Here is a 340-residue protein sequence, read N- to C-terminus: Guanine nucleotide-binding protein G(I)/G(S)/G(T) subunit beta-1 (340 aa).

Serine 2 is modified (N-acetylserine). The residue at position 2 (serine 2) is a Phosphoserine. 7 WD repeats span residues 46–94, 95–140, 141–181, 182–223, 224–267, 268–309, and 310–340; these read RTRR…HAIP, LRSS…RELA, GHTG…TTFT, GHTG…QTFT, GHES…YSHD, NIIC…GVLA, and GHDD…KIWN. Histidine 266 is subject to Phosphohistidine.

It belongs to the WD repeat G protein beta family. G proteins are composed of 3 units, alpha, beta and gamma. The heterodimer formed by GNB1 and GNG2 interacts with ARHGEF5. The heterodimer formed by GNB1 and GNG2 interacts with GRK2. Forms a complex with GNAO1 and GNG3. Interacts with ARHGEF18 and RASD2. Forms complexes with TAS2R14 and G-proteins; these complexes play a role in the perception of bitterness. Component of the TAS2R14-GNAI1 complex, consisting of TAS2R14, GNAI1, GNB1 and GNG2. Component of the TAS2R14-GNAT3 complex, consisting of TAS2R14, GNAT3, GNB1 and GNG2. Component of the TAS2R14-GNAS2 complex, consisting of TAS2R14, GNAS2, GNB1 and GNG2. Post-translationally, phosphorylation at His-266 by NDKB contributes to G protein activation by increasing the high energetic phosphate transfer onto GDP.

Functionally, guanine nucleotide-binding proteins (G proteins) are involved as a modulator or transducer in various transmembrane signaling systems. The beta and gamma chains are required for the GTPase activity, for replacement of GDP by GTP, and for G protein-effector interaction. This Pongo abelii (Sumatran orangutan) protein is Guanine nucleotide-binding protein G(I)/G(S)/G(T) subunit beta-1 (GNB1).